The primary structure comprises 291 residues: tRNA dimethylallyltransferase (291 aa).

Position 9–16 (9–16) interacts with ATP; sequence GPTASGKT. 11-16 is a substrate binding site; sequence TASGKT. Residues 34 to 37 are interaction with substrate tRNA; sequence DSLQ.

It belongs to the IPP transferase family. Monomer. It depends on Mg(2+) as a cofactor.

It carries out the reaction adenosine(37) in tRNA + dimethylallyl diphosphate = N(6)-dimethylallyladenosine(37) in tRNA + diphosphate. Functionally, catalyzes the transfer of a dimethylallyl group onto the adenine at position 37 in tRNAs that read codons beginning with uridine, leading to the formation of N6-(dimethylallyl)adenosine (i(6)A). In Onion yellows phytoplasma (strain OY-M), this protein is tRNA dimethylallyltransferase.